The following is a 589-amino-acid chain: ATP-dependent lipid A-core flippase (589 aa).

Transmembrane regions (helical) follow at residues 29-49, 70-90, 157-177, 261-281, and 283-303; these read LLLV…TGFL, WLPV…YITD, VIGA…TILV, MIGA…ALAG, and LTAG…PGLK. An ABC transmembrane type-1 domain is found at 32 to 314; it reads VAALIAALIE…LTNVQNMVQR (283 aa). The 237-residue stretch at 346-582 folds into the ABC transporter domain; sequence IEFRDVTARY…GGLYSHLHGM (237 aa). An ATP-binding site is contributed by 380–387; that stretch reads GRSGSGKS.

The protein belongs to the ABC transporter superfamily. Lipid exporter (TC 3.A.1.106) family. As to quaternary structure, homodimer.

Its subcellular location is the cell inner membrane. It carries out the reaction ATP + H2O + lipid A-core oligosaccharideSide 1 = ADP + phosphate + lipid A-core oligosaccharideSide 2.. Involved in lipopolysaccharide (LPS) biosynthesis. Translocates lipid A-core from the inner to the outer leaflet of the inner membrane. Transmembrane domains (TMD) form a pore in the inner membrane and the ATP-binding domain (NBD) is responsible for energy generation. The protein is ATP-dependent lipid A-core flippase of Xanthomonas axonopodis pv. citri (strain 306).